A 153-amino-acid polypeptide reads, in one-letter code: Aspartate carbamoyltransferase regulatory chain (153 aa).

Cysteine 109, cysteine 114, cysteine 138, and cysteine 141 together coordinate Zn(2+).

Belongs to the PyrI family. In terms of assembly, contains catalytic and regulatory chains. Zn(2+) serves as cofactor.

Functionally, involved in allosteric regulation of aspartate carbamoyltransferase. The chain is Aspartate carbamoyltransferase regulatory chain from Shigella dysenteriae serotype 1 (strain Sd197).